The primary structure comprises 547 residues: Chaperonin GroEL (547 aa).

ATP-binding positions include 30–33 (TLGP), Lys51, 87–91 (DGTTT), Gly415, 479–481 (NAA), and Asp495.

The protein belongs to the chaperonin (HSP60) family. As to quaternary structure, forms a cylinder of 14 subunits composed of two heptameric rings stacked back-to-back. Interacts with the co-chaperonin GroES.

The protein resides in the cytoplasm. It carries out the reaction ATP + H2O + a folded polypeptide = ADP + phosphate + an unfolded polypeptide.. Its function is as follows. Together with its co-chaperonin GroES, plays an essential role in assisting protein folding. The GroEL-GroES system forms a nano-cage that allows encapsulation of the non-native substrate proteins and provides a physical environment optimized to promote and accelerate protein folding. The chain is Chaperonin GroEL from Pseudomonas aeruginosa (strain UCBPP-PA14).